A 390-amino-acid chain; its full sequence is Scoulerine-9-O-methyltransferase 1 (390 aa).

E153 serves as a coordination point for substrate. S-adenosyl-L-methionine contacts are provided by residues M207, S211, G235, D258, 278–279, and K292; that span reads DM. Residue H296 is the Proton acceptor of the active site. 296-297 lines the substrate pocket; sequence HD.

Belongs to the class I-like SAM-binding methyltransferase superfamily. Cation-independent O-methyltransferase family. COMT subfamily. Homodimer. In terms of tissue distribution, highly expressed in capsules. Expressed is stems. Expressed at low levels in roots.

It carries out the reaction (S)-scoulerine + S-adenosyl-L-methionine = (S)-tetrahydrocolumbamine + S-adenosyl-L-homocysteine + H(+). It catalyses the reaction (S)-tetrahydrocolumbamine + S-adenosyl-L-methionine = (S)-tetrahydropalmatine + S-adenosyl-L-homocysteine + H(+). The enzyme catalyses (S)-norreticuline + S-adenosyl-L-methionine = (S)-norcodamine + S-adenosyl-L-homocysteine + H(+). The catalysed reaction is (S)-reticuline + S-adenosyl-L-methionine = (S)-codamine + S-adenosyl-L-homocysteine + H(+). The protein operates within alkaloid biosynthesis. Functionally, methyltransferase involved in the biosynthesis of the benzylisoquinoline alkaloid noscapine. Catalyzes the conversion of (S)-scoulerine to (S)-tetrahydrocolumbamine. Can convert (S)-tetrahydrocolumbamine to tetrahydropalmatine. Can convert (S)-norreticuline to (S)-norcodamine. Can convert (S)-reticuline to (S)-codamine. Substrate preference is (S)-scoulerine &gt; (S)-tetrahydrocolumbamine &gt; (S)-norreticuline &gt; (S)-reticuline. This chain is Scoulerine-9-O-methyltransferase 1, found in Papaver somniferum (Opium poppy).